Here is a 102-residue protein sequence, read N- to C-terminus: Pyrimidine/purine nucleoside phosphorylase (102 aa).

The protein belongs to the nucleoside phosphorylase PpnP family.

The catalysed reaction is a purine D-ribonucleoside + phosphate = a purine nucleobase + alpha-D-ribose 1-phosphate. It carries out the reaction adenosine + phosphate = alpha-D-ribose 1-phosphate + adenine. The enzyme catalyses cytidine + phosphate = cytosine + alpha-D-ribose 1-phosphate. It catalyses the reaction guanosine + phosphate = alpha-D-ribose 1-phosphate + guanine. The catalysed reaction is inosine + phosphate = alpha-D-ribose 1-phosphate + hypoxanthine. It carries out the reaction thymidine + phosphate = 2-deoxy-alpha-D-ribose 1-phosphate + thymine. The enzyme catalyses uridine + phosphate = alpha-D-ribose 1-phosphate + uracil. It catalyses the reaction xanthosine + phosphate = alpha-D-ribose 1-phosphate + xanthine. Catalyzes the phosphorolysis of diverse nucleosides, yielding D-ribose 1-phosphate and the respective free bases. Can use uridine, adenosine, guanosine, cytidine, thymidine, inosine and xanthosine as substrates. Also catalyzes the reverse reactions. In Shewanella amazonensis (strain ATCC BAA-1098 / SB2B), this protein is Pyrimidine/purine nucleoside phosphorylase.